A 109-amino-acid polypeptide reads, in one-letter code: UPF0122 protein BH2485 (109 aa).

The protein belongs to the UPF0122 family.

Functionally, might take part in the signal recognition particle (SRP) pathway. This is inferred from the conservation of its genetic proximity to ftsY/ffh. May be a regulatory protein. The sequence is that of UPF0122 protein BH2485 from Halalkalibacterium halodurans (strain ATCC BAA-125 / DSM 18197 / FERM 7344 / JCM 9153 / C-125) (Bacillus halodurans).